Consider the following 149-residue polypeptide: Epoxide hydrolase EphG (149 aa).

Catalysis depends on Asp-93, which acts as the Proton donor. Catalysis depends on Asp-122, which acts as the Proton acceptor.

The protein belongs to the limonene-1,2-epoxide hydrolase family. As to quaternary structure, homodimer. Is also present as monomer in solution.

It catalyses the reaction an epoxide + H2O = an ethanediol. It carries out the reaction 5,6alpha-epoxy-5alpha-cholestan-3beta-ol + H2O = 5alpha-cholestane-3beta,5,6beta-triol. The enzyme catalyses 5,6beta-epoxy-5beta-cholestan-3beta-ol + H2O = 5alpha-cholestane-3beta,5,6beta-triol. Is inhibited by the anti-epileptic drug valpromide (Ki value of about 100 uM). Functionally, epoxide hydrolase capable of hydrolyzing long or bulky lipophilic epoxides such as 9,10-epoxystearic acid and cholesterol 5,6-oxide in vitro. The physiological substrates have yet to be identified, but could be fatty acid or steroid derivatives. The sequence is that of Epoxide hydrolase EphG (ephG) from Mycobacterium tuberculosis (strain ATCC 25618 / H37Rv).